Consider the following 61-residue polypeptide: Neurotoxin-like protein 1 (61 aa).

Disulfide bonds link Cys3-Cys24, Cys17-Cys38, Cys42-Cys53, and Cys54-Cys59.

Expressed by the venom gland.

The protein resides in the secreted. The polypeptide is Neurotoxin-like protein 1 (Causus rhombeatus (Rhombic night adder)).